The following is a 547-amino-acid chain: CTP synthase (547 aa).

Residues 1-265 (MTRYVFITGG…DEIVLRKLHI (265 aa)) are amidoligase domain. Serine 13 is a CTP binding site. Serine 13 is a UTP binding site. ATP is bound by residues 14–19 (SLGKGI) and aspartate 71. The Mg(2+) site is built by aspartate 71 and glutamate 139. CTP is bound by residues 146–148 (DIE), 186–191 (KTKPTQ), and lysine 222. UTP is bound by residues 186-191 (KTKPTQ) and lysine 222. In terms of domain architecture, Glutamine amidotransferase type-1 spans 290 to 541 (TVGMVGKYVD…IRAARAQHEK (252 aa)). Residue glycine 351 participates in L-glutamine binding. Cysteine 378 serves as the catalytic Nucleophile; for glutamine hydrolysis. L-glutamine is bound by residues 379–382 (LGMQ), glutamate 402, and arginine 469. Catalysis depends on residues histidine 514 and glutamate 516.

The protein belongs to the CTP synthase family. As to quaternary structure, homotetramer.

The catalysed reaction is UTP + L-glutamine + ATP + H2O = CTP + L-glutamate + ADP + phosphate + 2 H(+). It catalyses the reaction L-glutamine + H2O = L-glutamate + NH4(+). It carries out the reaction UTP + NH4(+) + ATP = CTP + ADP + phosphate + 2 H(+). Its pathway is pyrimidine metabolism; CTP biosynthesis via de novo pathway; CTP from UDP: step 2/2. Allosterically activated by GTP, when glutamine is the substrate; GTP has no effect on the reaction when ammonia is the substrate. The allosteric effector GTP functions by stabilizing the protein conformation that binds the tetrahedral intermediate(s) formed during glutamine hydrolysis. Inhibited by the product CTP, via allosteric rather than competitive inhibition. In terms of biological role, catalyzes the ATP-dependent amination of UTP to CTP with either L-glutamine or ammonia as the source of nitrogen. Regulates intracellular CTP levels through interactions with the four ribonucleotide triphosphates. In Thioalkalivibrio sulfidiphilus (strain HL-EbGR7), this protein is CTP synthase.